Consider the following 263-residue polypeptide: 3-methyl-2-oxobutanoate hydroxymethyltransferase (263 aa).

Residues D43 and D82 each contribute to the Mg(2+) site. Residues 43-44 (DS), D82, and K111 contribute to the 3-methyl-2-oxobutanoate site. Residue E113 coordinates Mg(2+). The active-site Proton acceptor is the E179.

This sequence belongs to the PanB family. Homodecamer; pentamer of dimers. It depends on Mg(2+) as a cofactor.

It localises to the cytoplasm. The catalysed reaction is 3-methyl-2-oxobutanoate + (6R)-5,10-methylene-5,6,7,8-tetrahydrofolate + H2O = 2-dehydropantoate + (6S)-5,6,7,8-tetrahydrofolate. It functions in the pathway cofactor biosynthesis; (R)-pantothenate biosynthesis; (R)-pantoate from 3-methyl-2-oxobutanoate: step 1/2. In terms of biological role, catalyzes the reversible reaction in which hydroxymethyl group from 5,10-methylenetetrahydrofolate is transferred onto alpha-ketoisovalerate to form ketopantoate. The sequence is that of 3-methyl-2-oxobutanoate hydroxymethyltransferase from Neisseria gonorrhoeae (strain ATCC 700825 / FA 1090).